A 154-amino-acid chain; its full sequence is Protein X (154 aa).

Positions 68-117 are mitochondrial targeting sequence; the sequence is PCALRFTSARRMETTVNTHMILPKVLHKRTLGLPAMSTIDLEAYFKDCLF.

The protein belongs to the orthohepadnavirus protein X family. In terms of assembly, may form homodimer. May interact with host CEBPA, CFLAR, CREB1, DDB1, E4F1, HBXIP, HSPD1/HSP60, NFKBIA, POLR2E and SMAD4. Interacts with host SMC5-SMC6 complex and induces its degradation. Interacts with host TRPC4AP; leading to prevent ubiquitination of TRPC4AP. Interacts with host PLSCR1; this interaction promotes ubiquitination and degradation of HBx and impairs HBx-mediated cell proliferation. In terms of processing, a fraction may be phosphorylated in insect cells and HepG2 cells, a human hepatoblastoma cell line. Phosphorylated in vitro by host protein kinase C or mitogen-activated protein kinase. N-acetylated in insect cells.

Its subcellular location is the host cytoplasm. The protein resides in the host nucleus. The protein localises to the host mitochondrion. Its function is as follows. Multifunctional protein that plays a role in silencing host antiviral defenses and promoting viral transcription. Does not seem to be essential for HBV infection. May be directly involved in development of cirrhosis and liver cancer (hepatocellular carcinoma). Most of cytosolic activities involve modulation of cytosolic calcium. The effect on apoptosis is controversial depending on the cell types in which the studies have been conducted. May induce apoptosis by localizing in mitochondria and causing loss of mitochondrial membrane potential. May also modulate apoptosis by binding host CFLAR, a key regulator of the death-inducing signaling complex (DISC). Promotes viral transcription by using the host E3 ubiquitin ligase DDB1 to target the SMC5-SMC6 complex to proteasomal degradation. This host complex would otherwise bind to viral episomal DNA, and prevents its transcription. Moderately stimulates transcription of many different viral and cellular transcription elements. Promoters and enhancers stimulated by HBx contain DNA binding sites for NF-kappa-B, AP-1, AP-2, c-EBP, ATF/CREB, or the calcium-activated factor NF-AT. This is Protein X from Hepatitis B virus genotype C subtype ayw (isolate Australia/AustRC/1992) (HBV-C).